Here is a 198-residue protein sequence, read N- to C-terminus: Holliday junction resolvase RecU (198 aa).

The segment at 1 to 21 (MVNYPHKLSSQKRQPSLSQPK) is disordered. The span at 11–21 (QKRQPSLSQPK) shows a compositional bias: polar residues. Positions 81, 83, 96, and 115 each coordinate Mg(2+).

The protein belongs to the RecU family. Mg(2+) is required as a cofactor.

The protein localises to the cytoplasm. The enzyme catalyses Endonucleolytic cleavage at a junction such as a reciprocal single-stranded crossover between two homologous DNA duplexes (Holliday junction).. Functionally, endonuclease that resolves Holliday junction intermediates in genetic recombination. Cleaves mobile four-strand junctions by introducing symmetrical nicks in paired strands. Promotes annealing of linear ssDNA with homologous dsDNA. Required for DNA repair, homologous recombination and chromosome segregation. In Streptococcus pneumoniae (strain Taiwan19F-14), this protein is Holliday junction resolvase RecU.